Reading from the N-terminus, the 131-residue chain is Acanthoscurrin-2 (131 aa).

Position 130 is a lysine amide (Lys-130).

As to expression, expressed in hemocytes and secreted into the plasma following bacterial immune challenge.

The protein resides in the secreted. Its function is as follows. Antimicrobial protein. Strong activity against the Gram-negative bacterium E.coli SBS363 and yeast C.albicans. No detectable activity against the Gram-positive bacterium M.luteus. This chain is Acanthoscurrin-2, found in Acanthoscurria gomesiana (Tarantula spider).